We begin with the raw amino-acid sequence, 804 residues long: Cyclic di-GMP-binding protein (804 aa).

Residues 1 to 18 form the signal peptide; that stretch reads MKMVSLIALLVFATGAQA. Residues 19–766 are Periplasmic-facing; that stretch reads APIASKAPAH…DWYMHNHPFR (748 aa). The tract at residues 24 to 69 is disordered; the sequence is KAPAHQPTGSDLPPLPAAAPVAPAAQPSAQAVDPASAAPASDAGSA. A helical membrane pass occupies residues 767 to 787; that stretch reads VIVVGLVGCLLVVAVLVRALF. Over 788–804 the chain is Cytoplasmic; it reads RHAMFRRRQLQEERQKS.

This sequence belongs to the AcsB/BcsB family. Tightly associated with the cellulose synthase catalytic subunit.

It localises to the cell inner membrane. Its pathway is glycan metabolism; bacterial cellulose biosynthesis. Its function is as follows. Binds the cellulose synthase activator, bis-(3'-5') cyclic diguanylic acid (c-di-GMP). The sequence is that of Cyclic di-GMP-binding protein (bcsBI) from Komagataeibacter xylinus (Gluconacetobacter xylinus).